Reading from the N-terminus, the 470-residue chain is Sulfate adenylyltransferase subunit 1 (470 aa).

In terms of domain architecture, tr-type G spans 22 to 238; sequence KELLRFITCG…ETIKIDYAYT (217 aa). Positions 31-38 are G1; it reads GSVDDGKS. 31-38 is a binding site for GTP; the sequence is GSVDDGKS. Residues 89–93 form a G2 region; sequence GITID. The G3 stretch occupies residues 110–113; it reads DTPG. Residues 110-114 and 165-168 each bind GTP; these read DTPGH and NKMD. A G4 region spans residues 165–168; that stretch reads NKMD. The tract at residues 202-204 is G5; that stretch reads SAL.

Belongs to the TRAFAC class translation factor GTPase superfamily. Classic translation factor GTPase family. CysN/NodQ subfamily. Heterodimer composed of CysD, the smaller subunit, and CysN.

It catalyses the reaction sulfate + ATP + H(+) = adenosine 5'-phosphosulfate + diphosphate. It functions in the pathway sulfur metabolism; hydrogen sulfide biosynthesis; sulfite from sulfate: step 1/3. Functionally, with CysD forms the ATP sulfurylase (ATPS) that catalyzes the adenylation of sulfate producing adenosine 5'-phosphosulfate (APS) and diphosphate, the first enzymatic step in sulfur assimilation pathway. APS synthesis involves the formation of a high-energy phosphoric-sulfuric acid anhydride bond driven by GTP hydrolysis by CysN coupled to ATP hydrolysis by CysD. The chain is Sulfate adenylyltransferase subunit 1 from Francisella tularensis subsp. tularensis (strain SCHU S4 / Schu 4).